The following is a 123-amino-acid chain: Small ribosomal subunit protein uS12 (123 aa).

Asp89 carries the post-translational modification 3-methylthioaspartic acid.

It belongs to the universal ribosomal protein uS12 family. As to quaternary structure, part of the 30S ribosomal subunit. Contacts proteins S8 and S17. May interact with IF1 in the 30S initiation complex.

In terms of biological role, with S4 and S5 plays an important role in translational accuracy. Interacts with and stabilizes bases of the 16S rRNA that are involved in tRNA selection in the A site and with the mRNA backbone. Located at the interface of the 30S and 50S subunits, it traverses the body of the 30S subunit contacting proteins on the other side and probably holding the rRNA structure together. The combined cluster of proteins S8, S12 and S17 appears to hold together the shoulder and platform of the 30S subunit. The chain is Small ribosomal subunit protein uS12 from Brucella abortus (strain S19).